A 235-amino-acid chain; its full sequence is Ion-translocating oxidoreductase complex subunit E (235 aa).

The next 5 membrane-spanning stretches (helical) occupy residues 63 to 83, 93 to 113, 117 to 137, 152 to 172, and 206 to 226; these read LGLS…ISLF, IPIY…LMNA, TLYQ…IIIG, IWDG…LGAL, and SFLL…LLAI.

This sequence belongs to the NqrDE/RnfAE family. In terms of assembly, the complex is composed of six subunits: RnfA, RnfB, RnfC, RnfD, RnfE and RnfG.

The protein localises to the cell inner membrane. Part of a membrane-bound complex that couples electron transfer with translocation of ions across the membrane. This is Ion-translocating oxidoreductase complex subunit E from Haemophilus influenzae (strain PittEE).